Here is a 417-residue protein sequence, read N- to C-terminus: Serine hydroxymethyltransferase (417 aa).

(6S)-5,6,7,8-tetrahydrofolate is bound by residues Leu-121 and 125–127; that span reads GHL. Position 229 is an N6-(pyridoxal phosphate)lysine (Lys-229). A (6S)-5,6,7,8-tetrahydrofolate-binding site is contributed by 355–357; the sequence is SPF.

It belongs to the SHMT family. As to quaternary structure, homodimer. The cofactor is pyridoxal 5'-phosphate.

It is found in the cytoplasm. The enzyme catalyses (6R)-5,10-methylene-5,6,7,8-tetrahydrofolate + glycine + H2O = (6S)-5,6,7,8-tetrahydrofolate + L-serine. The protein operates within one-carbon metabolism; tetrahydrofolate interconversion. Its pathway is amino-acid biosynthesis; glycine biosynthesis; glycine from L-serine: step 1/1. Its function is as follows. Catalyzes the reversible interconversion of serine and glycine with tetrahydrofolate (THF) serving as the one-carbon carrier. This reaction serves as the major source of one-carbon groups required for the biosynthesis of purines, thymidylate, methionine, and other important biomolecules. Also exhibits THF-independent aldolase activity toward beta-hydroxyamino acids, producing glycine and aldehydes, via a retro-aldol mechanism. The polypeptide is Serine hydroxymethyltransferase (Salmonella schwarzengrund (strain CVM19633)).